A 489-amino-acid polypeptide reads, in one-letter code: Rhamnulokinase (489 aa).

13–17 (ASSGR) is an ATP binding site. A disulfide bridge links C68 with C222. Residues G83 and 236–238 (HDT) each bind substrate. D237 serves as the catalytic Proton acceptor. An ATP-binding site is contributed by T259. Residue N296 coordinates substrate. Q304 is an ATP binding site. Residues C353 and C370 are joined by a disulfide bond. An ATP-binding site is contributed by G402. C413 and C417 are oxidised to a cystine.

The protein belongs to the rhamnulokinase family. It depends on Mg(2+) as a cofactor.

The catalysed reaction is L-rhamnulose + ATP = L-rhamnulose 1-phosphate + ADP + H(+). The protein operates within carbohydrate degradation; L-rhamnose degradation; glycerone phosphate from L-rhamnose: step 2/3. In terms of biological role, involved in the catabolism of L-rhamnose (6-deoxy-L-mannose). Catalyzes the transfer of the gamma-phosphate group from ATP to the 1-hydroxyl group of L-rhamnulose to yield L-rhamnulose 1-phosphate. The chain is Rhamnulokinase from Shigella flexneri serotype 5b (strain 8401).